The primary structure comprises 398 residues: LL-diaminopimelate aminotransferase (398 aa).

Positions 14 and 41 each coordinate substrate. Residues Tyr-71, 104 to 105 (AK), Tyr-128, Asn-174, Tyr-205, and 233 to 235 (SFS) each bind pyridoxal 5'-phosphate. 3 residues coordinate substrate: Lys-105, Tyr-128, and Asn-174. An N6-(pyridoxal phosphate)lysine modification is found at Lys-236. Arg-244 and Asn-275 together coordinate pyridoxal 5'-phosphate. Substrate-binding residues include Asn-275 and Arg-368.

The protein belongs to the class-I pyridoxal-phosphate-dependent aminotransferase family. LL-diaminopimelate aminotransferase subfamily. In terms of assembly, homodimer. Pyridoxal 5'-phosphate is required as a cofactor.

It catalyses the reaction (2S,6S)-2,6-diaminopimelate + 2-oxoglutarate = (S)-2,3,4,5-tetrahydrodipicolinate + L-glutamate + H2O + H(+). It participates in amino-acid biosynthesis; L-lysine biosynthesis via DAP pathway; LL-2,6-diaminopimelate from (S)-tetrahydrodipicolinate (aminotransferase route): step 1/1. In terms of biological role, involved in the synthesis of meso-diaminopimelate (m-DAP or DL-DAP), required for both lysine and peptidoglycan biosynthesis. Catalyzes the direct conversion of tetrahydrodipicolinate to LL-diaminopimelate. The polypeptide is LL-diaminopimelate aminotransferase (Chlamydia felis (strain Fe/C-56) (Chlamydophila felis)).